The following is a 756-amino-acid chain: Ent-kaurene synthase, chloroplastic (756 aa).

Mg(2+) is bound by residues Asp507 and Asp511. The DDXXD motif motif lies at 507 to 511 (DDFFD). Residues 606–622 (YVSFALGPIVLPCLYLV) traverse the membrane as a helical segment. The Mg(2+) site is built by Asn651, Thr655, and Glu659.

The protein belongs to the terpene synthase family. Mg(2+) is required as a cofactor. Present in both leaves and flowers.

It is found in the plastid. The protein localises to the chloroplast membrane. The catalysed reaction is ent-copalyl diphosphate = ent-kaur-16-ene + diphosphate. The protein operates within plant hormone biosynthesis; gibberellin biosynthesis. Functionally, involved in the biosynthesis of labdane-type diterpenoid including marrubiin and other labdane-related furanoid diterpenoids with potential applications as anti-diabetics, analgesics or vasorelaxants. Terpene synthase that produces ent-kaurene from ent-copalyl diphosphate (ent-CPP). The polypeptide is Ent-kaurene synthase, chloroplastic (Marrubium vulgare (White horehound)).